Consider the following 450-residue polypeptide: 3-phosphoshikimate 1-carboxyvinyltransferase (450 aa).

The tract at residues 1-26 (MSAHGDPIPMTAHPSGPLSGTAQVPG) is disordered. 3-phosphoshikimate-binding residues include K28, S29, and R33. K28 serves as a coordination point for phosphoenolpyruvate. Phosphoenolpyruvate is bound by residues G101 and R129. The 3-phosphoshikimate site is built by S174, Q176, D327, and K354. Phosphoenolpyruvate is bound at residue Q176. D327 (proton acceptor) is an active-site residue. The phosphoenolpyruvate site is built by R358 and R403.

This sequence belongs to the EPSP synthase family. In terms of assembly, monomer.

It localises to the cytoplasm. It catalyses the reaction 3-phosphoshikimate + phosphoenolpyruvate = 5-O-(1-carboxyvinyl)-3-phosphoshikimate + phosphate. It participates in metabolic intermediate biosynthesis; chorismate biosynthesis; chorismate from D-erythrose 4-phosphate and phosphoenolpyruvate: step 6/7. Functionally, catalyzes the transfer of the enolpyruvyl moiety of phosphoenolpyruvate (PEP) to the 5-hydroxyl of shikimate-3-phosphate (S3P) to produce enolpyruvyl shikimate-3-phosphate and inorganic phosphate. This is 3-phosphoshikimate 1-carboxyvinyltransferase from Dinoroseobacter shibae (strain DSM 16493 / NCIMB 14021 / DFL 12).